The sequence spans 521 residues: Vang-like protein 2 (521 aa).

Residues 1-81 (MDNDSQYSGY…TTVVTGTSEH (81 aa)) are disordered. Topologically, residues 1–108 (MDNDSQYSGY…AKLDCSRHLG (108 aa)) are cytoplasmic. Residues 15–33 (GHSRSSRKHRDRRERHRSK) show a composition bias toward basic residues. Positions 57 to 67 (ESTRGEDRDDN) are enriched in basic and acidic residues. Residues 69 to 81 (GETTTVVTGTSEH) show a composition bias toward low complexity. A helical transmembrane segment spans residues 109–129 (VVIGGALALLSFLTPIAFMLL). Over 130 to 147 (PQILWREDLEQCGTACEG) the chain is Extracellular. The helical transmembrane segment at 148–168 (LFISVAFKLLILLLGSWALFF) threads the bilayer. The Cytoplasmic segment spans residues 169–178 (RRPKAFFPRV). A helical membrane pass occupies residues 179–199 (FVFRALLMVLVFLLVVSYWLF). Topologically, residues 200-218 (YGVRILESRDKNYQGIVQY) are extracellular. A helical membrane pass occupies residues 219 to 239 (AVSLVDALLFVHYLAVVLLEL). Residues 240 to 521 (RQLQPQFTVK…VMRLQSETSV (282 aa)) lie on the Cytoplasmic side of the membrane. Positions 518–521 (ETSV) match the PDZ-binding motif.

This sequence belongs to the Vang family. In terms of assembly, interacts with dvl/dsh. Interacts with prickle3.

The protein resides in the cell membrane. In terms of biological role, has a role in non-canonical Wnt/planar cell polarity (PCP) signaling; can recruit dvl/dsh and prickle from the cytoplasm to the plasma membrane. Acts in a PCP complex to regulate the polarized assembly of fibronectrin on the surface of the mesoderm during gastrulation. Regulates convergent extension in both dorsal mesoderm and neural tissue without affecting cell fate. Regulates neural fold closure during neurulation. May be required for cell surface localization of fzd3 and fzd6 in the inner ear. The sequence is that of Vang-like protein 2 from Xenopus tropicalis (Western clawed frog).